The following is a 364-amino-acid chain: UDP-N-acetylglucosamine--N-acetylmuramyl-(pentapeptide) pyrophosphoryl-undecaprenol N-acetylglucosamine transferase 1 (364 aa).

UDP-N-acetyl-alpha-D-glucosamine-binding positions include 10 to 12 (TGG), N124, S195, I250, and Q295.

Belongs to the glycosyltransferase 28 family. MurG subfamily.

It localises to the cell membrane. The enzyme catalyses di-trans,octa-cis-undecaprenyl diphospho-N-acetyl-alpha-D-muramoyl-L-alanyl-D-glutamyl-meso-2,6-diaminopimeloyl-D-alanyl-D-alanine + UDP-N-acetyl-alpha-D-glucosamine = di-trans,octa-cis-undecaprenyl diphospho-[N-acetyl-alpha-D-glucosaminyl-(1-&gt;4)]-N-acetyl-alpha-D-muramoyl-L-alanyl-D-glutamyl-meso-2,6-diaminopimeloyl-D-alanyl-D-alanine + UDP + H(+). It functions in the pathway cell wall biogenesis; peptidoglycan biosynthesis. Cell wall formation. Catalyzes the transfer of a GlcNAc subunit on undecaprenyl-pyrophosphoryl-MurNAc-pentapeptide (lipid intermediate I) to form undecaprenyl-pyrophosphoryl-MurNAc-(pentapeptide)GlcNAc (lipid intermediate II). The protein is UDP-N-acetylglucosamine--N-acetylmuramyl-(pentapeptide) pyrophosphoryl-undecaprenol N-acetylglucosamine transferase 1 of Bacillus cereus (strain ATCC 14579 / DSM 31 / CCUG 7414 / JCM 2152 / NBRC 15305 / NCIMB 9373 / NCTC 2599 / NRRL B-3711).